We begin with the raw amino-acid sequence, 76 residues long: Small ribosomal subunit protein bS18 (76 aa).

Belongs to the bacterial ribosomal protein bS18 family. In terms of assembly, part of the 30S ribosomal subunit. Forms a tight heterodimer with protein bS6.

In terms of biological role, binds as a heterodimer with protein bS6 to the central domain of the 16S rRNA, where it helps stabilize the platform of the 30S subunit. The protein is Small ribosomal subunit protein bS18 of Stenotrophomonas maltophilia (strain R551-3).